We begin with the raw amino-acid sequence, 347 residues long: Dihydroorotate dehydrogenase (quinone) (347 aa).

FMN contacts are provided by residues 62 to 66 (AGLDK) and threonine 86. Lysine 66 serves as a coordination point for substrate. Residue 111 to 115 (NRMGF) coordinates substrate. FMN is bound by residues asparagine 142 and asparagine 175. Asparagine 175 serves as a coordination point for substrate. Residue serine 178 is the Nucleophile of the active site. Asparagine 180 is a substrate binding site. Lysine 220 and threonine 248 together coordinate FMN. 249–250 (NT) provides a ligand contact to substrate. FMN contacts are provided by residues glycine 271, glycine 300, and 321-322 (YS).

The protein belongs to the dihydroorotate dehydrogenase family. Type 2 subfamily. In terms of assembly, monomer. It depends on FMN as a cofactor.

It localises to the cell membrane. It catalyses the reaction (S)-dihydroorotate + a quinone = orotate + a quinol. The protein operates within pyrimidine metabolism; UMP biosynthesis via de novo pathway; orotate from (S)-dihydroorotate (quinone route): step 1/1. Functionally, catalyzes the conversion of dihydroorotate to orotate with quinone as electron acceptor. This chain is Dihydroorotate dehydrogenase (quinone), found in Dechloromonas aromatica (strain RCB).